Here is a 460-residue protein sequence, read N- to C-terminus: Tyrosine phenol-lyase (460 aa).

Lys260 carries the post-translational modification N6-(pyridoxal phosphate)lysine.

The protein belongs to the beta-eliminating lyase family. Homotetramer. The cofactor is pyridoxal 5'-phosphate.

The catalysed reaction is L-tyrosine + H2O = phenol + pyruvate + NH4(+). The chain is Tyrosine phenol-lyase from Clostridium tetani (strain Massachusetts / E88).